The primary structure comprises 114 residues: ATP synthase epsilon chain (114 aa).

Belongs to the ATPase epsilon chain family. As to quaternary structure, F-type ATPases have 2 components, CF(1) - the catalytic core - and CF(0) - the membrane proton channel. CF(1) has five subunits: alpha(3), beta(3), gamma(1), delta(1), epsilon(1). CF(0) has three main subunits: a, b and c.

The protein resides in the cell membrane. Produces ATP from ADP in the presence of a proton gradient across the membrane. The protein is ATP synthase epsilon chain of Wolbachia pipientis wMel.